The sequence spans 316 residues: MSGQASPGAESRLLLVTGLSGAGKSTVLKVLEDLGWEVVDNLPLALLEALIDAPVKRGEAERPLAVGIDSRSRGFRPALLVRRIKELREGGGRDIQTLFLDCAGAELERRFSETRRRHPLAEDRPAADGIAREREMMEPLRRWAEHVVDTTNYSSNDLQQEVRQRFGEADDGEPVLNILSFGFARGLPRNADLVFDMRYLRNPHWDPALKPGTGLDPDVAAYVIADPAYEETVSQIERLILTLLPRYRAEGKSYVTIAFGCTGGRHRSVHVAARVAQTLRGSGYEPTLTHRNLDSAPQDGLEGKPPSAARASGGAR.

Residue Gly18 to Ser25 coordinates ATP. A GTP-binding site is contributed by Asp69–Ser72. Residues Gly283–Arg316 form a disordered region.

This sequence belongs to the RapZ-like family.

Functionally, displays ATPase and GTPase activities. This Sphingopyxis alaskensis (strain DSM 13593 / LMG 18877 / RB2256) (Sphingomonas alaskensis) protein is Nucleotide-binding protein Sala_2050.